Reading from the N-terminus, the 66-residue chain is Small ribosomal subunit protein eS30 (66 aa).

The interval 1–35 is disordered; sequence MGKVHGGLNRAGKVRNATPKKDKEEKRKPKVGRAK.

This sequence belongs to the eukaryotic ribosomal protein eS30 family.

In Dictyostelium discoideum (Social amoeba), this protein is Small ribosomal subunit protein eS30 (rps30-1).